Here is a 120-residue protein sequence, read N- to C-terminus: U13-lycotoxin-Ls1a (120 aa).

Residues Met1–Cys16 form the signal peptide. Positions Phe17 to Arg54 are excised as a propeptide. Disulfide bonds link Cys56/Cys70, Cys63/Cys76, Cys69/Cys87, and Cys78/Cys85. In terms of domain architecture, Agouti spans Cys56–Cys95.

This sequence belongs to the neurotoxin 05 (agouti) family. Post-translationally, contains 6 disulfide bonds. As to expression, expressed by the venom gland.

It localises to the secreted. The protein is U13-lycotoxin-Ls1a of Lycosa singoriensis (Wolf spider).